We begin with the raw amino-acid sequence, 394 residues long: Short-chain dehydrogenase/reductase family 42E member 1 (394 aa).

Residue Tyr-153 is the Proton acceptor of the active site. Position 157 (Lys-157) interacts with NAD(+). 2 consecutive transmembrane segments (helical) span residues 283-303 and 367-387; these read LPLTLIYCLAFLVEMTHFIVG and FMLWDGILILLLALSVLTWIL.

It belongs to the 3-beta-HSD family.

The protein localises to the membrane. The polypeptide is Short-chain dehydrogenase/reductase family 42E member 1 (Sdr42e1) (Mus musculus (Mouse)).